The sequence spans 261 residues: Chloroplastic import inner membrane translocase subunit HP30-1 (261 aa).

A run of 4 helical transmembrane segments spans residues 59 to 77 (AAVVSTMSGVQGAFIGGLM), 113 to 129 (NFAAITGVNAGIASVMK), 139 to 155 (SAVVAALGSGFAYSLVS), and 163 to 180 (MNAITTAAGFAVFQGVFF).

This sequence belongs to the Tim17/Tim22/Tim23 family. Probable component of a protein-conducting channel made of HP30-1, HP30-2 and HP20 that mediates the import of transit sequence-less proteins into the chloroplastic inner membrane. Interacts with CEQORH.

The protein localises to the plastid. It localises to the chloroplast inner membrane. Together with HP30-2 and HP20, triggers the import and insertion of transit sequence-less multi-pass transmembrane proteins (e.g. CEQORH) into the chloroplastic inner membrane. This is Chloroplastic import inner membrane translocase subunit HP30-1 from Arabidopsis thaliana (Mouse-ear cress).